Consider the following 125-residue polypeptide: Splicing factor 3B subunit 6 (125 aa).

An interaction with pre-mRNA branch site region spans residues 16–29 (EVNRILYIRNLPYK). The 76-residue stretch at 19-94 (RILYIRNLPY…RYLVVLYYNA (76 aa)) folds into the RRM domain. N6-acetyllysine; alternate is present on Lys-29. A Glycyl lysine isopeptide (Lys-Gly) (interchain with G-Cter in SUMO2); alternate cross-link involves residue Lys-29. Lys-41 carries the post-translational modification N6-acetyllysine.

In terms of assembly, component of the 17S U2 SnRNP complex, a ribonucleoprotein complex that contains small nuclear RNA (snRNA) U2 and a number of specific proteins. Part of the SF3B subcomplex of the 17S U2 SnRNP complex. SF3B associates with the splicing subcomplex SF3A and a 12S RNA unit to form the U2 small nuclear ribonucleoproteins complex (U2 snRNP). Within the SF3B complex interacts directly with SF3B1. Component of the minor spliceosome, which splices U12-type introns.

The protein localises to the nucleus. Functionally, component of the 17S U2 SnRNP complex of the spliceosome, a large ribonucleoprotein complex that removes introns from transcribed pre-mRNAs. The 17S U2 SnRNP complex (1) directly participates in early spliceosome assembly and (2) mediates recognition of the intron branch site during pre-mRNA splicing by promoting the selection of the pre-mRNA branch-site adenosine, the nucleophile for the first step of splicing. Within the 17S U2 SnRNP complex, SF3B6 is part of the SF3B subcomplex, which is required for 'A' complex assembly formed by the stable binding of U2 snRNP to the branchpoint sequence in pre-mRNA. Sequence independent binding of SF3A and SF3B subcomplexes upstream of the branch site is essential, it may anchor U2 snRNP to the pre-mRNA. Within the 17S U2 SnRNP complex, SF3B6 directly contacts the pre-mRNA branch site adenosine for the first catalytic step of splicing. SF3B6 stabilizes the intron branch site-U2 snRNA duplex, thereby promoting-binding of introns with poor sequence complementarity. Also acts as a component of the minor spliceosome, which is involved in the splicing of U12-type introns in pre-mRNAs. In Mus musculus (Mouse), this protein is Splicing factor 3B subunit 6 (Sf3b6).